The following is a 219-amino-acid chain: Thymidylate kinase (219 aa).

Position 9–16 (9–16) interacts with ATP; it reads GIEGCGKT.

Belongs to the thymidylate kinase family.

It catalyses the reaction dTMP + ATP = dTDP + ADP. Phosphorylation of dTMP to form dTDP in both de novo and salvage pathways of dTTP synthesis. This is Thymidylate kinase from Syntrophus aciditrophicus (strain SB).